A 634-amino-acid polypeptide reads, in one-letter code: Threonine--tRNA ligase (634 aa).

A TGS domain is found at methionine 1–threonine 61. The catalytic stretch occupies residues aspartate 241–proline 532. Residues cysteine 332, histidine 383, and histidine 509 each coordinate Zn(2+).

The protein belongs to the class-II aminoacyl-tRNA synthetase family. As to quaternary structure, homodimer. It depends on Zn(2+) as a cofactor.

Its subcellular location is the cytoplasm. It carries out the reaction tRNA(Thr) + L-threonine + ATP = L-threonyl-tRNA(Thr) + AMP + diphosphate + H(+). Functionally, catalyzes the attachment of threonine to tRNA(Thr) in a two-step reaction: L-threonine is first activated by ATP to form Thr-AMP and then transferred to the acceptor end of tRNA(Thr). Also edits incorrectly charged L-seryl-tRNA(Thr). This Francisella tularensis subsp. novicida (strain U112) protein is Threonine--tRNA ligase.